The chain runs to 241 residues: Phosphatidylglycerophosphatase B (241 aa).

The chain crosses the membrane as a helical span at residues 1–21 (MFKRLSLYTLLLCLVPFFIWG). Residues 22–52 (ISYQWHGNSQLTQADYWLYLLTETGSVPYAL) are Periplasmic-facing. Residues 53–62 (ITCVLFTLLF) form a helical membrane-spanning segment. At 63 to 67 (AFLFK) the chain is on the cytoplasmic side. A helical membrane pass occupies residues 68–91 (NPKQWILGVIVMGISVIATQAAKT). The Periplasmic segment spans residues 92-158 (GAKALFEEPR…ENETGYSFPS (67 aa)). The tract at residues 94-102 (KALFEEPRP) is phosphatase sequence motif I. Residues 157 to 160 (PSGH) are phosphatase sequence motif II. A helical transmembrane segment spans residues 159–173 (GHTIFAATWLMLAVG). H160 serves as the catalytic Proton donor; for a subset of substrates. At 174–184 (FTQLLGNRSFK) the chain is on the cytoplasmic side. A helical membrane pass occupies residues 185–204 (AKLLVVGIAVWGLLMLISRV). The segment at 202 to 213 (SRVRLGMHYPID) is phosphatase sequence motif III. At 205–210 (RLGMHY) the chain is on the periplasmic side. H209 serves as the catalytic Nucleophile. A helical membrane pass occupies residues 211-235 (PIDLLVATLLAWLINSIIFAFLKKK). At 236 to 241 (AIFVMK) the chain is on the cytoplasmic side.

This sequence belongs to the PA-phosphatase related phosphoesterase family.

It localises to the cell inner membrane. Its subcellular location is the cell outer membrane. It catalyses the reaction a 1,2-diacyl-sn-glycero-3-phospho-(1'-sn-glycero-3'-phosphate) + H2O = a 1,2-diacyl-sn-glycero-3-phospho-(1'-sn-glycerol) + phosphate. It carries out the reaction a 1,2-diacyl-sn-glycerol 3-diphosphate + H2O = a 1,2-diacyl-sn-glycero-3-phosphate + phosphate + H(+). The catalysed reaction is a 1,2-diacyl-sn-glycero-3-phosphate + H2O = a 1,2-diacyl-sn-glycerol + phosphate. The enzyme catalyses di-trans,octa-cis-undecaprenyl diphosphate + H2O = di-trans,octa-cis-undecaprenyl phosphate + phosphate + H(+). It functions in the pathway phospholipid metabolism; phosphatidylglycerol biosynthesis; phosphatidylglycerol from CDP-diacylglycerol: step 2/2. In terms of biological role, catalyzes the dephosphorylation of diacylglycerol diphosphate (DGPP) to phosphatidate (PA) and the subsequent dephosphorylation of PA to diacylglycerol (DAG). Also has undecaprenyl pyrophosphate phosphatase activity, required for the biosynthesis of the lipid carrier undecaprenyl phosphate. Can also use lysophosphatidic acid (LPA) and phosphatidylglycerophosphate as substrates. The pattern of activities varies according to subcellular location, PGP phosphatase activity is higher in the cytoplasmic membrane, whereas PA and LPA phosphatase activities are higher in the outer membrane. Activity is independent of a divalent cation ion and insensitive to inhibition by N-ethylmaleimide. This is Phosphatidylglycerophosphatase B (pgpB) from Haemophilus influenzae (strain ATCC 51907 / DSM 11121 / KW20 / Rd).